A 152-amino-acid chain; its full sequence is Urease accessory protein UreE (152 aa).

It belongs to the UreE family.

Its subcellular location is the cytoplasm. Its function is as follows. Involved in urease metallocenter assembly. Binds nickel. Probably functions as a nickel donor during metallocenter assembly. The sequence is that of Urease accessory protein UreE from Psychromonas ingrahamii (strain DSM 17664 / CCUG 51855 / 37).